Reading from the N-terminus, the 512-residue chain is Amidase 2 (512 aa).

Catalysis depends on charge relay system residues Lys-122 and Ser-197. Substrate-binding positions include Ser-197 and 218 to 221 (IGGS). Ser-221 serves as the catalytic Acyl-ester intermediate.

This sequence belongs to the amidase family.

The enzyme catalyses a monocarboxylic acid amide + H2O = a monocarboxylate + NH4(+). It functions in the pathway xenobiotic degradation. Its function is as follows. Amidase; part of the Fusarium detoxification of benzoxazolinone cluster 2 (FDB2) involved in the degradation of benzoxazolinones produced by the host plant. Maize, wheat, and rye produce the 2 benzoxazinone phytoanticipins 2,4-dihy-droxy-7-methoxy-1,4-benzoxazin-3-one (DIMBOA) and 2,4-dihydroxy-1,4-benzoxazin-3-one (DIBOA) that, due to their inherent instability once released, spontaneously degrade to the more stable corresponding benzoxazolinones, 6-methoxy-2-benzoxazolinone (MBOA) and 2-benzoxazolinone (BOA), respectively. The first step in the detoxification of benzoxazolinones involves the hydrolysis of the cyclic ester bond of benzoxazolinones by the FDB1 cluster gamma-lactamase MBL1 to aminophenols. MBL1 is able to convert BOA into 2-aminophenol (2-AP), as well as MBOA into 5-methoxy-2-aminophenol (2-AMP). The FDB2 cluster N-malonyltransferase FDB2/NAT1 then metabolizes aminophenols via N-malonylation to non-toxic malonamic acids. FDB2/NAT1 converts 2-AP into N-(2-hydroxyphenyl) malonamic acid (HPMA) and 2-AMP into N-(2-hydroxy-4-methoxyphenyl) malonamic acid (HMPMA). The duplicated dienlactone hydrolases DLH1 and DLH2 may provide redundant function for hydrolyzing the lactone moiety in the BOA molecule. The roles of the amidases an other enzymes encoded by the 2 FDB clusters have not been identified so far. This is Amidase 2 from Gibberella moniliformis (strain M3125 / FGSC 7600) (Maize ear and stalk rot fungus).